A 164-amino-acid chain; its full sequence is Endoribonuclease YbeY (164 aa).

H117, H121, and H127 together coordinate Zn(2+).

Belongs to the endoribonuclease YbeY family. Zn(2+) serves as cofactor.

Its subcellular location is the cytoplasm. Its function is as follows. Single strand-specific metallo-endoribonuclease involved in late-stage 70S ribosome quality control and in maturation of the 3' terminus of the 16S rRNA. The chain is Endoribonuclease YbeY from Mycoplasma capricolum subsp. capricolum (strain California kid / ATCC 27343 / NCTC 10154).